The chain runs to 381 residues: Putative F-box protein At3g17500 (381 aa).

One can recognise an F-box domain in the interval 1-45; sequence MMSNLPLDLVEEILSRVPATSLKRLRSTCKSWNNCYKDQRFTEKH.

The sequence is that of Putative F-box protein At3g17500 from Arabidopsis thaliana (Mouse-ear cress).